We begin with the raw amino-acid sequence, 290 residues long: MKSHGTAYGAGTIINAIAVWKGSAFAIDLKTHATVELRGDLIEGEIEGGGDSRLIERACELTLDKLGVDSGAKIRTTSEIPIASGLKSSSAAANATIIATCRAARQSVDPLEMVRIGVQAALDVGVSVTGAFDDACASMLGGVVLTDNREKALLKREVLESKVVVYAPDKKAFSAQTDVKKSRLIAPWVETAFDIAMRGDYRKAMALNGFLYCSALGFSAEPILAALELGVTGVSLSGTGPSYVALVSEEGEEADRLKKAWSAYPGRVFVTEVINEGAFLLEGEECRWNT.

81 to 91 (PIASGLKSSSA) is a binding site for ATP.

It belongs to the GHMP kinase family. Archaeal shikimate kinase subfamily.

It is found in the cytoplasm. It carries out the reaction shikimate + ATP = 3-phosphoshikimate + ADP + H(+). The protein operates within metabolic intermediate biosynthesis; chorismate biosynthesis; chorismate from D-erythrose 4-phosphate and phosphoenolpyruvate: step 5/7. The sequence is that of Shikimate kinase from Methanocella arvoryzae (strain DSM 22066 / NBRC 105507 / MRE50).